Here is a 63-residue protein sequence, read N- to C-terminus: Mu-like prophage FluMu protein gp38 (63 aa).

The protein to phage Mu protein gp38.

This Haemophilus influenzae (strain ATCC 51907 / DSM 11121 / KW20 / Rd) protein is Mu-like prophage FluMu protein gp38.